The chain runs to 365 residues: tRNA/tmRNA (uracil-C(5))-methyltransferase (365 aa).

5 residues coordinate S-adenosyl-L-methionine: Gln189, Tyr217, Asn222, Glu238, and Asp298. Cys323 functions as the Nucleophile in the catalytic mechanism. Glu357 functions as the Proton acceptor in the catalytic mechanism.

Belongs to the class I-like SAM-binding methyltransferase superfamily. RNA M5U methyltransferase family. TrmA subfamily.

The catalysed reaction is uridine(54) in tRNA + S-adenosyl-L-methionine = 5-methyluridine(54) in tRNA + S-adenosyl-L-homocysteine + H(+). It catalyses the reaction uridine(341) in tmRNA + S-adenosyl-L-methionine = 5-methyluridine(341) in tmRNA + S-adenosyl-L-homocysteine + H(+). In terms of biological role, dual-specificity methyltransferase that catalyzes the formation of 5-methyluridine at position 54 (m5U54) in all tRNAs, and that of position 341 (m5U341) in tmRNA (transfer-mRNA). The chain is tRNA/tmRNA (uracil-C(5))-methyltransferase from Shewanella loihica (strain ATCC BAA-1088 / PV-4).